We begin with the raw amino-acid sequence, 896 residues long: Desmocollin-3 (896 aa).

A signal peptide spans 1 to 31; that stretch reads MVVPEFRSPQCRALCTKLLLTLWVFSFVGEA. The propeptide occupies 32 to 135; the sequence is CKKVTFHVPS…KETVLRRSKR (104 aa). 5 Cadherin domains span residues 136–243, 244–355, 356–472, 473–580, and 581–691; these read RWAP…YPLF, TEAI…APTF, RQNT…GPEC, KPPE…EIIQ, and DYIV…TLGK. Residues 136 to 695 lie on the Extracellular side of the membrane; sequence RWAPIPCSMQ…GITLGKWAIL (560 aa). N-linked (GlcNAc...) asparagine glycosylation is present at asparagine 166. Asparagine 392 and asparagine 547 each carry an N-linked (GlcNAc...) asparagine glycan. N-linked (GlcNAc...) (high mannose) asparagine glycosylation occurs at asparagine 630. Residues 696-716 form a helical membrane-spanning segment; the sequence is AILLGIALLFSVLLTLVCGVV. At 717 to 896 the chain is on the cytoplasmic side; the sequence is TARKGKHFPE…LTLAETCTKR (180 aa).

In terms of assembly, may form homodimers. Interacts with DSG1; there is evidence to suggest that the interaction promotes cell-cell adhesion of keratinocytes. As to expression, expressed in the basal layers of epidermal stratified epithelia from birth (at protein level).

The protein resides in the cell membrane. It is found in the cell junction. Its subcellular location is the desmosome. It localises to the cytoplasm. Its function is as follows. A component of desmosome cell-cell junctions which are required for positive regulation of cellular adhesion. Required for cell-cell adhesion in the epidermis, as a result required for the maintenance of the dermal cohesion and the dermal barrier function. Required for cell-cell adhesion of epithelial cell layers surrounding the telogen hair club, as a result plays an important role in telogen hair shaft anchorage. Essential for successful completion of embryo compaction and development beyond the 8-cell stage. This Mus musculus (Mouse) protein is Desmocollin-3 (Dsc3).